Consider the following 548-residue polypeptide: Membrane protein insertase YidC (548 aa).

A helical transmembrane segment spans residues 6–26 (NLLVIALLFVSFMIWQAWEQD). Positions 28–58 (NPQPQQQQTTQTTTTAAGSAADQGVPASGQG) are disordered. Over residues 29-42 (PQPQQQQTTQTTTT) the composition is skewed to low complexity. A run of 4 helical transmembrane segments spans residues 350–370 (FLGNWGFSIIVITFIVRGIMY), 420–440 (LGGCFPLLIQMPIFLALYYML), 458–478 (LSAQDPYYILPILMGITMFFI), and 499–519 (PVIFTVFFLWFPSGLVLYYIV).

It belongs to the OXA1/ALB3/YidC family. Type 1 subfamily. Interacts with the Sec translocase complex via SecD. Specifically interacts with transmembrane segments of nascent integral membrane proteins during membrane integration.

It localises to the cell inner membrane. Required for the insertion and/or proper folding and/or complex formation of integral membrane proteins into the membrane. Involved in integration of membrane proteins that insert both dependently and independently of the Sec translocase complex, as well as at least some lipoproteins. Aids folding of multispanning membrane proteins. In Enterobacter sp. (strain 638), this protein is Membrane protein insertase YidC.